The primary structure comprises 721 residues: Ribonucleoside-diphosphate reductase subunit alpha (721 aa).

Substrate-binding positions include Thr-159, 175–176 (SC), Gly-204, 384–388 (NLCSE), and 589–593 (PTGSI). The cysteines at positions 176 and 413 are disulfide-linked. Asn-384 functions as the Proton acceptor in the catalytic mechanism. Cys-386 acts as the Cysteine radical intermediate in catalysis. Glu-388 (proton acceptor) is an active-site residue.

The protein belongs to the ribonucleoside diphosphate reductase large chain family. As to quaternary structure, tetramer of two alpha and two beta subunits.

The enzyme catalyses a 2'-deoxyribonucleoside 5'-diphosphate + [thioredoxin]-disulfide + H2O = a ribonucleoside 5'-diphosphate + [thioredoxin]-dithiol. With respect to regulation, under complex allosteric control mediated by deoxynucleoside triphosphates and ATP binding. The type of nucleotide bound at the specificity site determines substrate preference. It seems probable that ATP makes the enzyme reduce CDP and UDP, dGTP favors ADP reduction and dTTP favors GDP reduction. Provides the precursors necessary for DNA synthesis. Catalyzes the biosynthesis of deoxyribonucleotides from the corresponding ribonucleotides. The sequence is that of Ribonucleoside-diphosphate reductase subunit alpha (nrdE) from Mycoplasma pneumoniae (strain ATCC 29342 / M129 / Subtype 1) (Mycoplasmoides pneumoniae).